The primary structure comprises 152 residues: Glutaredoxin-related protein 5, mitochondrial (152 aa).

A mitochondrion-targeting transit peptide spans 1–31 (MSASLSRAAAALLRWGRSAGGGGLPGAGVRA). Residues 38–141 (AEQLDALVKK…EELKKLGIRS (104 aa)) form the Glutaredoxin domain. Lys55 provides a ligand contact to glutathione. An N6-succinyllysine modification is found at Lys55. Cys63 is a binding site for [2Fe-2S] cluster. Glutathione contacts are provided by residues 93–97 (RQGIK), Ile105, and 118–119 (CD). Residue Ser151 is modified to Phosphoserine.

The protein belongs to the glutaredoxin family. Monothiol subfamily. As to quaternary structure, homodimer. Interacts with ISCU. Interacts with BOLA1. In terms of tissue distribution, detected in bone, liver, muscle and kidney.

It localises to the mitochondrion matrix. In terms of biological role, monothiol glutaredoxin involved in mitochondrial iron-sulfur (Fe/S) cluster transfer. Receives 2Fe/2S clusters from scaffold protein ISCU and mediates their transfer to apoproteins, to the 4Fe/FS cluster biosynthesis machinery, or export from mitochondrion. Required for normal regulation of hemoglobin synthesis by the iron-sulfur protein ACO1. The polypeptide is Glutaredoxin-related protein 5, mitochondrial (Glrx5) (Mus musculus (Mouse)).